Here is a 129-residue protein sequence, read N- to C-terminus: MVTTLTPVICESAPAAAASYSHAMKVNNLIFLSGQIPVTPDNKLVEGSIADKAEQVIQNIKNVLEASNSSLDRVVKVNIFLADINHFAEFNSVYAKYFNTHKPARSCVAVAALPLGVDMEMEAIAAERD.

A Glycyl lysine isopeptide (Lys-Gly) (interchain with G-Cter in ubiquitin) cross-link involves residue lysine 52.

This sequence belongs to the RutC family.

It localises to the cytoplasm. It is found in the nucleus. The protein localises to the mitochondrion intermembrane space. The polypeptide is Protein HMF1 (HMF1) (Saccharomyces cerevisiae (strain ATCC 204508 / S288c) (Baker's yeast)).